We begin with the raw amino-acid sequence, 261 residues long: Transmembrane and immunoglobulin domain-containing protein 1 (261 aa).

The first 27 residues, 1-27 (MAQKTSGLIQRCRFLLLMILFLPHVMT), serve as a signal peptide directing secretion. Residues 28–114 (SSVLSVNGKT…LQRNQSVSIS (87 aa)) form the Ig-like C2-type 1 domain. Residues 28 to 219 (SSVLSVNGKT…IVKDKGSTVP (192 aa)) are Extracellular-facing. A disulfide bridge links Cys-54 with Cys-103. N-linked (GlcNAc...) asparagine glycans are attached at residues Asn-83, Asn-108, Asn-118, and Asn-189. The Ig-like C2-type 2 domain occupies 122–208 (PPLLSGNDFQ…LIETKTKDFH (87 aa)). A disulfide bridge links Cys-143 with Cys-194. A helical transmembrane segment spans residues 220-240 (IEPIIAACVVVFLTLVFGVIA). The Cytoplasmic segment spans residues 241–261 (RRKRIMKLCRKDQGPQCRTAL).

In terms of assembly, homodimer. N-glycosylated.

It is found in the cell membrane. The protein localises to the cytoplasm. Its function is as follows. May control cell-cell adhesion, cell migration and proliferation, cell morphology, and protects renal epithelial cells from oxidative cell injury to promote cell survival. This chain is Transmembrane and immunoglobulin domain-containing protein 1, found in Bos taurus (Bovine).